Reading from the N-terminus, the 185-residue chain is Peptide deformylase 2 (185 aa).

Positions 108 and 150 each coordinate Fe cation. E151 is a catalytic residue. H154 serves as a coordination point for Fe cation.

Belongs to the polypeptide deformylase family. Requires Fe(2+) as cofactor.

It catalyses the reaction N-terminal N-formyl-L-methionyl-[peptide] + H2O = N-terminal L-methionyl-[peptide] + formate. Removes the formyl group from the N-terminal Met of newly synthesized proteins. Requires at least a dipeptide for an efficient rate of reaction. N-terminal L-methionine is a prerequisite for activity but the enzyme has broad specificity at other positions. The protein is Peptide deformylase 2 of Nitrosomonas europaea (strain ATCC 19718 / CIP 103999 / KCTC 2705 / NBRC 14298).